A 432-amino-acid polypeptide reads, in one-letter code: Enolase (432 aa).

Residue Gln-167 participates in (2R)-2-phosphoglycerate binding. Residue Glu-209 is the Proton donor of the active site. Residues Asp-246, Glu-291, and Asp-318 each coordinate Mg(2+). The (2R)-2-phosphoglycerate site is built by Lys-343, Arg-372, Ser-373, and Lys-394. Lys-343 (proton acceptor) is an active-site residue.

This sequence belongs to the enolase family. Component of the RNA degradosome, a multiprotein complex involved in RNA processing and mRNA degradation. Mg(2+) is required as a cofactor.

Its subcellular location is the cytoplasm. It localises to the secreted. The protein localises to the cell surface. It carries out the reaction (2R)-2-phosphoglycerate = phosphoenolpyruvate + H2O. Its pathway is carbohydrate degradation; glycolysis; pyruvate from D-glyceraldehyde 3-phosphate: step 4/5. In terms of biological role, catalyzes the reversible conversion of 2-phosphoglycerate (2-PG) into phosphoenolpyruvate (PEP). It is essential for the degradation of carbohydrates via glycolysis. The sequence is that of Enolase from Buchnera aphidicola subsp. Cinara cedri (strain Cc).